Consider the following 431-residue polypeptide: Foot protein 1 variant 2 (431 aa).

Positions 1–20 are cleaved as a signal peptide; sequence MARNMNILTLFAVLLGSASA. 3',4'-dihydroxyphenylalanine is present on Tyr-22. At Pro-33 the chain carries 4-hydroxyproline. The A-1; approximate repeat unit spans residues 41–50; that stretch reads VPPPAWTAWK. Positions 41–270 are 13 X 10 AA A-P-P-P-A-W-T-A-W-K; the sequence is VPPPAWTAWK…APPPAWTAWK (230 aa). Trp-46, Trp-49, Trp-56, and Trp-59 each carry 7'-hydroxytryptophan. 4 C-linked (Man) hydroxytryptophan glycosylation sites follow: Trp-46, Trp-49, Trp-56, and Trp-59. The A-2; approximate repeat unit spans residues 51-60; sequence AHPPAWTAWK. A B-1 repeat occupies 61–70; it reads ATPKPWTAWK. A 27 X 10 AA A-T-P-K-P-W-T-A-W-K region spans residues 61-310; it reads ATPKPWTAWK…ATPKPWTAWR (250 aa). Pro-65 carries the 4-hydroxyproline modification. C-linked (Man) tryptophan glycosylation occurs at Trp-66. Position 69 is a 7'-hydroxytryptophan (Trp-69). A C-linked (Man) hydroxytryptophan glycan is attached at Trp-69. Residues 71–80 form an A-3 repeat; sequence APPPAWTAWK. Residues Pro-72, Pro-73, and Pro-74 each carry the 4-hydroxyproline modification. Residues Trp-76 and Trp-79 each carry the 7'-hydroxytryptophan modification. Residues Trp-76 and Trp-79 are each glycosylated (C-linked (Man) hydroxytryptophan). The B-2 repeat unit spans residues 81–90; that stretch reads ATPKPWTAWK. Position 85 is a 4-hydroxyproline (Pro-85). C-linked (Man) tryptophan glycosylation occurs at Trp-86. Position 89 is a 7'-hydroxytryptophan (Trp-89). A glycan (C-linked (Man) hydroxytryptophan) is linked at Trp-89. The A-4; approximate repeat unit spans residues 91–100; sequence APPPTWTAWK. Residues Pro-92, Pro-93, and Pro-94 each carry the 4-hydroxyproline modification. 7'-hydroxytryptophan is present on residues Trp-96 and Trp-99. C-linked (Man) hydroxytryptophan glycosylation is found at Trp-96 and Trp-99. One copy of the B-3 repeat lies at 101 to 110; sequence ATPKPWTAWK. Pro-105 is modified (4-hydroxyproline). Trp-106 carries C-linked (Man) tryptophan glycosylation. The residue at position 109 (Trp-109) is a 7'-hydroxytryptophan. A C-linked (Man) hydroxytryptophan glycan is attached at Trp-109. The stretch at 111–120 is one A-5; approximate repeat; it reads APPPVWTAWK. Residues Pro-112, Pro-113, and Pro-114 each carry the 4-hydroxyproline modification. 7'-hydroxytryptophan occurs at positions 116 and 119. C-linked (Man) hydroxytryptophan glycosylation is found at Trp-116 and Trp-119. One copy of the B-4; approximate repeat lies at 121-130; that stretch reads ATPKPRTAWK. A 4-hydroxyproline modification is found at Pro-125. Residue Trp-129 is modified to 7'-hydroxytryptophan. The C-linked (Man) hydroxytryptophan glycan is linked to Trp-129. The A-6; approximate repeat unit spans residues 131-140; the sequence is APPPTWTAWK. Pro-132, Pro-133, and Pro-134 each carry 4-hydroxyproline. A 7'-hydroxytryptophan mark is found at Trp-136 and Trp-139. 2 C-linked (Man) hydroxytryptophan glycosylation sites follow: Trp-136 and Trp-139. Residues 141 to 150 form a B-5; approximate repeat; sequence AAPKPWTAWK. 4-hydroxyproline is present on Pro-145. A C-linked (Man) tryptophan glycan is attached at Trp-146. At Trp-149 the chain carries 7'-hydroxytryptophan. C-linked (Man) hydroxytryptophan glycosylation is present at Trp-149. A B-6 repeat occupies 151-160; the sequence is ATPKPWTAWK. Pro-155 is subject to 4-hydroxyproline. Trp-156 carries a C-linked (Man) tryptophan glycan. 7'-hydroxytryptophan is present on Trp-159. Trp-159 carries a C-linked (Man) hydroxytryptophan glycan. Residues 161-170 form an A-7 repeat; sequence APPPAWTAWK. A 4-hydroxyproline mark is found at Pro-162, Pro-163, and Pro-164. 7'-hydroxytryptophan is present on residues Trp-166 and Trp-169. Residues Trp-166 and Trp-169 are each glycosylated (C-linked (Man) hydroxytryptophan). A B-7 repeat occupies 171-180; sequence ATPKPWTAWK. A 4-hydroxyproline modification is found at Pro-175. Trp-176 carries a C-linked (Man) tryptophan glycan. Trp-179 carries the post-translational modification 7'-hydroxytryptophan. The C-linked (Man) hydroxytryptophan glycan is linked to Trp-179. Residues 181-190 form a B-8 repeat; sequence ATPKPWTAWK. Position 185 is a 4-hydroxyproline (Pro-185). A glycan (C-linked (Man) tryptophan) is linked at Trp-186. Trp-189 carries the 7'-hydroxytryptophan modification. Trp-189 is a glycosylation site (C-linked (Man) hydroxytryptophan). Residues 191-200 form a B-9 repeat; the sequence is ATPKPWTAWK. Pro-195 is modified (4-hydroxyproline). Trp-196 carries a C-linked (Man) tryptophan glycan. Trp-199 is subject to 7'-hydroxytryptophan. Trp-199 carries C-linked (Man) hydroxytryptophan glycosylation. One copy of the B-10; approximate repeat lies at 201–210; that stretch reads ATPKPWTVWK. Pro-205 is modified (4-hydroxyproline). Trp-206 is a glycosylation site (C-linked (Man) tryptophan). A 7'-hydroxytryptophan modification is found at Trp-209. A glycan (C-linked (Man) hydroxytryptophan) is linked at Trp-209. A B-11 repeat occupies 211–220; the sequence is ATPKPWTAWK. At Pro-215 the chain carries 4-hydroxyproline. A C-linked (Man) tryptophan glycan is attached at Trp-216. At Trp-219 the chain carries 7'-hydroxytryptophan. The C-linked (Man) hydroxytryptophan glycan is linked to Trp-219. An A-8 repeat occupies 221-230; the sequence is APPPAWTAWK. 4-hydroxyproline is present on residues Pro-222, Pro-223, and Pro-224. Residues Trp-226 and Trp-229 each carry the 7'-hydroxytryptophan modification. Trp-226 and Trp-229 each carry a C-linked (Man) hydroxytryptophan glycan. One copy of the B-12 repeat lies at 231-240; it reads ATPKPWTAWK. A 4-hydroxyproline modification is found at Pro-235. Trp-236 is a glycosylation site (C-linked (Man) tryptophan). Position 239 is a 7'-hydroxytryptophan (Trp-239). Trp-239 carries a C-linked (Man) hydroxytryptophan glycan. The stretch at 241 to 250 is one A-9 repeat; that stretch reads APPPAWTAWK. Pro-242, Pro-243, and Pro-244 each carry 4-hydroxyproline. 2 positions are modified to 7'-hydroxytryptophan: Trp-246 and Trp-249. Residues Trp-246 and Trp-249 are each glycosylated (C-linked (Man) hydroxytryptophan). One copy of the B-13 repeat lies at 251-260; that stretch reads ATPKPWTAWK. Pro-255 carries the 4-hydroxyproline modification. Trp-256 carries C-linked (Man) tryptophan glycosylation. Trp-259 is subject to 7'-hydroxytryptophan. Residue Trp-259 is glycosylated (C-linked (Man) hydroxytryptophan). An A-10 repeat occupies 261–270; the sequence is APPPAWTAWK. Residues Pro-262, Pro-263, and Pro-264 each carry the 4-hydroxyproline modification. 7'-hydroxytryptophan is present on residues Trp-266 and Trp-269. Residues Trp-266 and Trp-269 are each glycosylated (C-linked (Man) hydroxytryptophan). The stretch at 271–280 is one B-14 repeat; sequence ATPKPWTAWK. Position 275 is a 4-hydroxyproline (Pro-275). C-linked (Man) tryptophan glycosylation occurs at Trp-276. 7'-hydroxytryptophan is present on Trp-279. Residue Trp-279 is glycosylated (C-linked (Man) hydroxytryptophan). The stretch at 281-290 is one B-15 repeat; the sequence is ATPKPWTAWK. Residue Pro-285 is modified to 4-hydroxyproline. The C-linked (Man) tryptophan glycan is linked to Trp-286. Trp-289 carries the 7'-hydroxytryptophan modification. Residue Trp-289 is glycosylated (C-linked (Man) hydroxytryptophan). A B-16 repeat occupies 291–300; that stretch reads ATPKPWTAWK. Pro-295 is modified (4-hydroxyproline). Trp-296 carries C-linked (Man) tryptophan glycosylation. Trp-299 bears the 7'-hydroxytryptophan mark. Trp-299 is a glycosylation site (C-linked (Man) hydroxytryptophan). The B-17; approximate repeat unit spans residues 301 to 310; it reads ATPKPWTAWR. At Pro-305 the chain carries 4-hydroxyproline. Trp-306 carries a C-linked (Man) tryptophan glycan. Trp-309 is modified (7'-hydroxytryptophan). C-linked (Man) hydroxytryptophan glycosylation occurs at Trp-309. Residues 322–377 form a disordered region; the sequence is GHGYGGYGKPGKPGKPGSKGPRGPAGPPGATGKTGRTGATGKRGPPGYPGKPGVPG. Positions 323–332 are enriched in gly residues; the sequence is HGYGGYGKPG. One can recognise a Collagen-like domain in the interval 329-380; that stretch reads GKPGKPGKPGSKGPRGPAGPPGATGKTGRTGATGKRGPPGYPGKPGVPGRNG. The segment covering 336–366 has biased composition (low complexity); that stretch reads KPGSKGPRGPAGPPGATGKTGRTGATGKRGP. 4-hydroxyproline occurs at positions 367, 370, and 376.

In terms of tissue distribution, produced by the byssal gland.

Its subcellular location is the secreted. Its function is as follows. Provides adhesiveness to the mussel's foot. Mussels produce one of the strongest water insoluble glues. The mussel's adhesive is a bundle of threads, called a byssus, formed by a fibrous collagenous core coated with adhesive proteins. The polypeptide is Foot protein 1 variant 2 (Perna viridis (Asian green mussel)).